Here is a 470-residue protein sequence, read N- to C-terminus: tRNA-2-methylthio-N(6)-dimethylallyladenosine synthase (470 aa).

Residues 5 to 122 (RKLYVKSFGC…LPELLAEAKA (118 aa)) enclose the MTTase N-terminal domain. Residues cysteine 14, cysteine 50, cysteine 85, cysteine 163, cysteine 167, and cysteine 170 each contribute to the [4Fe-4S] cluster site. The Radical SAM core domain maps to 149–383 (RSRGPAAFVT…LLEASKAAFD (235 aa)). Positions 384 to 446 (ESCRGRTFDI…PNSLAGVPAE (63 aa)) constitute a TRAM domain. A disordered region spans residues 439-470 (SLAGVPAEASEPSVSQSPVSSARSRPLAAMEA). The span at 444–464 (PAEASEPSVSQSPVSSARSRP) shows a compositional bias: low complexity.

This sequence belongs to the methylthiotransferase family. MiaB subfamily. Monomer. [4Fe-4S] cluster serves as cofactor.

It is found in the cytoplasm. The catalysed reaction is N(6)-dimethylallyladenosine(37) in tRNA + (sulfur carrier)-SH + AH2 + 2 S-adenosyl-L-methionine = 2-methylsulfanyl-N(6)-dimethylallyladenosine(37) in tRNA + (sulfur carrier)-H + 5'-deoxyadenosine + L-methionine + A + S-adenosyl-L-homocysteine + 2 H(+). Catalyzes the methylthiolation of N6-(dimethylallyl)adenosine (i(6)A), leading to the formation of 2-methylthio-N6-(dimethylallyl)adenosine (ms(2)i(6)A) at position 37 in tRNAs that read codons beginning with uridine. This chain is tRNA-2-methylthio-N(6)-dimethylallyladenosine synthase, found in Xanthobacter autotrophicus (strain ATCC BAA-1158 / Py2).